The primary structure comprises 373 residues: MKYAAALTAVAALAARAAAVGVSGTPVGFASSATGGGDATPVYPTTTDELVSYLGDDEARVIVLSKTFDFTDTEGTTTTTGCAPWGTASGCQLAINKDDWCTNYEPDAPTTTVTYNTAGELGITVNSNKSLIGEGTSGVIKGRGLRMVSGVSNIIIQNIAVTDINPEYVWGGDAITLDEADLVWIDHVTTARIGRQHYVLGTDADSRVSITNNYINGESDYSATCDGHHYWNVYLDGSSDKVTFSGNYLYKTSGRAPKVQDNTYLHIYNNYWENNSGHAFEIGSGGYVLAEGNYFSNVDTVLETDTFEGALFSSDSASSTCESYIGRSCVANVNGGDLTGTSTTVLSNLSGDTLPSADAASTSPASNAGQGNL.

The first 24 residues, 1–24, serve as a signal peptide directing secretion; the sequence is MKYAAALTAVAALAARAAAVGVSG. Intrachain disulfides connect Cys-82/Cys-101 and Cys-91/Cys-225. Residue Asn-128 is glycosylated (N-linked (GlcNAc...) asparagine). Arg-255 is a catalytic residue. Asn-274 carries N-linked (GlcNAc...) asparagine glycosylation. Cys-321 and Cys-329 form a disulfide bridge. N-linked (GlcNAc...) asparagine glycosylation is present at Asn-348. A compositionally biased stretch (low complexity) spans 354-366; it reads LPSADAASTSPAS. The interval 354 to 373 is disordered; sequence LPSADAASTSPASNAGQGNL.

It belongs to the polysaccharide lyase 1 family.

The protein resides in the secreted. The enzyme catalyses Eliminative cleavage of (1-&gt;4)-alpha-D-galacturonan methyl ester to give oligosaccharides with 4-deoxy-6-O-methyl-alpha-D-galact-4-enuronosyl groups at their non-reducing ends.. In terms of biological role, pectinolytic enzymes consist of four classes of enzymes: pectin lyase, polygalacturonase, pectin methylesterase and rhamnogalacturonase. Among pectinolytic enzymes, pectin lyase is the most important in depolymerization of pectin, since it cleaves internal glycosidic bonds of highly methylated pectins. This is Probable pectin lyase D (pelD) from Aspergillus niger (strain ATCC MYA-4892 / CBS 513.88 / FGSC A1513).